We begin with the raw amino-acid sequence, 443 residues long: Deoxyguanosinetriphosphate triphosphohydrolase-like protein (443 aa).

Positions R66 to G259 constitute an HD domain.

The protein belongs to the dGTPase family. Type 2 subfamily.

The chain is Deoxyguanosinetriphosphate triphosphohydrolase-like protein from Vibrio vulnificus (strain CMCP6).